Consider the following 380-residue polypeptide: Coiled-coil domain-containing protein 74B (380 aa).

Disordered stretches follow at residues 1–51 (MSGA…KRNL), 89–108 (LIMN…HLSR), and 128–202 (GGPS…DVPQ). A compositionally biased stretch (polar residues) spans 34 to 44 (LRPQSPQLRQS). Residues 47 to 93 (QKRNLDLEKSLQFLQQQHSEMLAKLHEEIEHLKRENKDLRYKLIMNQ) adopt a coiled-coil conformation. Over residues 141-151 (RTHRPGGKHGR) the composition is skewed to basic residues. Polar residues predominate over residues 165-182 (DSLSTSSFQSVKSISNSG).

The chain is Coiled-coil domain-containing protein 74B (CCDC74B) from Homo sapiens (Human).